The following is a 161-amino-acid chain: Phosphopantetheine adenylyltransferase (161 aa).

Substrate is bound at residue serine 11. Residues serine 11–phenylalanine 12 and histidine 19 each bind ATP. Substrate is bound by residues lysine 43, leucine 75, and arginine 89. ATP is bound by residues glycine 90–arginine 92, glutamate 100, and tyrosine 125–serine 131.

This sequence belongs to the bacterial CoaD family. In terms of assembly, homohexamer. Requires Mg(2+) as cofactor.

The protein resides in the cytoplasm. The enzyme catalyses (R)-4'-phosphopantetheine + ATP + H(+) = 3'-dephospho-CoA + diphosphate. It functions in the pathway cofactor biosynthesis; coenzyme A biosynthesis; CoA from (R)-pantothenate: step 4/5. In terms of biological role, reversibly transfers an adenylyl group from ATP to 4'-phosphopantetheine, yielding dephospho-CoA (dPCoA) and pyrophosphate. This chain is Phosphopantetheine adenylyltransferase, found in Geotalea daltonii (strain DSM 22248 / JCM 15807 / FRC-32) (Geobacter daltonii).